Reading from the N-terminus, the 1382-residue chain is DNA-directed RNA polymerase subunit beta' (1382 aa).

4 residues coordinate Zn(2+): Cys-70, Cys-72, Cys-85, and Cys-88. Mg(2+) contacts are provided by Asp-460, Asp-462, and Asp-464. The Zn(2+) site is built by Cys-808, Cys-882, Cys-889, and Cys-892.

The protein belongs to the RNA polymerase beta' chain family. As to quaternary structure, the RNAP catalytic core consists of 2 alpha, 1 beta, 1 beta' and 1 omega subunit. When a sigma factor is associated with the core the holoenzyme is formed, which can initiate transcription. Requires Mg(2+) as cofactor. It depends on Zn(2+) as a cofactor.

The catalysed reaction is RNA(n) + a ribonucleoside 5'-triphosphate = RNA(n+1) + diphosphate. Its function is as follows. DNA-dependent RNA polymerase catalyzes the transcription of DNA into RNA using the four ribonucleoside triphosphates as substrates. This is DNA-directed RNA polymerase subunit beta' from Geobacter sp. (strain M21).